A 249-amino-acid polypeptide reads, in one-letter code: DNA repair protein RecO (249 aa).

Belongs to the RecO family.

Involved in DNA repair and RecF pathway recombination. The sequence is that of DNA repair protein RecO from Afipia carboxidovorans (strain ATCC 49405 / DSM 1227 / KCTC 32145 / OM5) (Oligotropha carboxidovorans).